The sequence spans 145 residues: Ribonuclease H (145 aa).

The RNase H type-1 domain occupies 1–141 (MQEVTIYSDG…ADALANRGVE (141 aa)). Mg(2+) is bound by residues D9, E47, D69, and D133.

The protein belongs to the RNase H family. Monomer. The cofactor is Mg(2+).

It is found in the cytoplasm. The enzyme catalyses Endonucleolytic cleavage to 5'-phosphomonoester.. Endonuclease that specifically degrades the RNA of RNA-DNA hybrids. The sequence is that of Ribonuclease H from Cupriavidus necator (strain ATCC 17699 / DSM 428 / KCTC 22496 / NCIMB 10442 / H16 / Stanier 337) (Ralstonia eutropha).